A 2055-amino-acid polypeptide reads, in one-letter code: Multiple PDZ domain protein (2055 aa).

Residues 1 to 63 (MLETIDKNRA…SLQQLKDQVN (63 aa)) form the L27 domain. The PDZ 1 domain maps to 138–225 (IFELLKPPCG…TVQLVIARGS (88 aa)). Residue Ser231 is modified to Phosphoserine. Residues 258–338 (TIELVNDGSG…RVKLMIARGA (81 aa)) enclose the PDZ 2 domain. A compositionally biased stretch (low complexity) spans 348 to 360 (LGITLSSSTSSTS). The disordered stretch occupies residues 348–372 (LGITLSSSTSSTSEMRVDASTQKND). 3 PDZ domains span residues 378–464 (DVEL…MRKG), 546–627 (VAHV…CRRT), and 693–779 (SIEL…VAKP). Phosphoserine occurs at positions 783 and 1066. The PDZ 6 domain maps to 996 to 1077 (TVTIAKGSSS…IGPDIKITYV (82 aa)). The tract at residues 1111–1130 (PELPEREEGEGEESELQNAA) is disordered. The 93-residue stretch at 1139-1231 (RVELWREPSK…PVVFMVQSII (93 aa)) folds into the PDZ 7 domain. The residue at position 1158 (Arg1158) is an Omega-N-methylarginine. Residues 1264–1274 (LTTDQAPSQSE) are compositionally biased toward polar residues. The segment at 1264–1299 (LTTDQAPSQSESETEKPALCNVPPSSPSVFSEMGSD) is disordered. One can recognise a PDZ 8 domain in the interval 1338–1421 (VIELEKGQSG…KVKIIFIRNA (84 aa)). Positions 1435-1445 (ADSPSSTSDSP) are enriched in low complexity. The tract at residues 1435-1459 (ADSPSSTSDSPQNKEVEPCSTTSAS) is disordered. The PDZ 9 domain occupies 1471–1552 (QLELPKDQGG…TVKLTVRAEN (82 aa)). The segment at 1557 to 1597 (AVPSSAVTVSGERKDNSQTPAVPAPDLEPIPSTSRSSTPAV) is disordered. PDZ domains are found at residues 1614-1697 (TIEI…YRDE) and 1710-1792 (TIEL…GRVK). The tract at residues 1795-1834 (PFHSERRPSQSSQVSESSLSSFTPPLSGINTSESLESNSK) is disordered. 2 positions are modified to phosphoserine: Ser1803 and Ser1809. A compositionally biased stretch (low complexity) spans 1803–1815 (SQSSQVSESSLSS). Polar residues predominate over residues 1816-1834 (FTPPLSGINTSESLESNSK). 2 PDZ domains span residues 1847-1933 (TVEI…VAGG) and 1972-2055 (TITL…MVLS).

In terms of assembly, interacts with CLDN5, DLG4, GRIN1, SYNGAP1, CAMK2A and CAMK2B, HTR2A, HTR2B, HTR2C, PLEKHA1/TAPP1 and PLEKHA2/TAPP2. Interacts with F11R/JAM, CLDN1, NG2, CXADR, CRB1, MPP4 and PALS1. Interacts with FAT4 (via cytoplasmic domain). Interacts with DLL1. As to expression, in the brain, it is strongly expressed in the choroid plexus. Within the hippocampal formation, strongest expression was seen in the soma of CA1-4 pyramidal cells. Expressed in most neocortical regions with the strongest expression in piriform cortex and amygdaloid nuclei but also detected in the subiculum and olfactory bulb. In the cerebellum, the highest level of expression was found in Purkinje cells. Moderately expressed in the granular layer and molecular layer. Expressed in the pontine nuclei, parts of spinal trigeminal nuclei, and the principal sensory trigeminal nuclei of the metencephalon. Expressed in all thalamic and hypothalamic nuclei, and the substantia nigra (at protein level). Ubiquitously expressed.

The protein localises to the cell membrane. It is found in the apical cell membrane. Its subcellular location is the postsynaptic density. It localises to the cell projection. The protein resides in the dendrite. The protein localises to the cell junction. It is found in the tight junction. Its subcellular location is the synapse. It localises to the synaptosome. In terms of biological role, member of the NMDAR signaling complex that may play a role in control of AMPAR potentiation and synaptic plasticity in excitatory synapses. Promotes clustering of HT2RC at the cell surface. The sequence is that of Multiple PDZ domain protein (Mpdz) from Mus musculus (Mouse).